The following is a 599-amino-acid chain: Kelch-like protein 41a (599 aa).

Residues 32–102 (VDCILKVGDR…LYSADIDITD (71 aa)) enclose the BTB domain. Residues 137–239 (CLAIFRMGLV…PEKYLKEKVE (103 aa)) enclose the BACK domain. 5 Kelch repeats span residues 339 to 391 (LLYV…EFEN), 393 to 440 (LFAV…SQNG), 441 to 488 (LVYC…VHKG), 489 to 535 (KIVV…SVDG), and 537 to 591 (LYAV…SMRL).

It is found in the cytoplasm. It localises to the cytoskeleton. The protein localises to the sarcoplasmic reticulum membrane. The protein resides in the endoplasmic reticulum membrane. In terms of biological role, involved in skeletal muscle development and differentiation. This Danio rerio (Zebrafish) protein is Kelch-like protein 41a (klhl41a).